The following is a 439-amino-acid chain: Serine--tRNA ligase (439 aa).

An L-serine-binding site is contributed by 247-249; that stretch reads TSE. 278-280 lines the ATP pocket; the sequence is RSE. E301 serves as a coordination point for L-serine. Residue 365-368 participates in ATP binding; it reads EISS. S400 contacts L-serine.

It belongs to the class-II aminoacyl-tRNA synthetase family. Type-1 seryl-tRNA synthetase subfamily. In terms of assembly, homodimer. The tRNA molecule binds across the dimer.

The protein resides in the cytoplasm. It carries out the reaction tRNA(Ser) + L-serine + ATP = L-seryl-tRNA(Ser) + AMP + diphosphate + H(+). The catalysed reaction is tRNA(Sec) + L-serine + ATP = L-seryl-tRNA(Sec) + AMP + diphosphate + H(+). It participates in aminoacyl-tRNA biosynthesis; selenocysteinyl-tRNA(Sec) biosynthesis; L-seryl-tRNA(Sec) from L-serine and tRNA(Sec): step 1/1. Catalyzes the attachment of serine to tRNA(Ser). Is also able to aminoacylate tRNA(Sec) with serine, to form the misacylated tRNA L-seryl-tRNA(Sec), which will be further converted into selenocysteinyl-tRNA(Sec). The chain is Serine--tRNA ligase from Paracidovorax citrulli (strain AAC00-1) (Acidovorax citrulli).